A 363-amino-acid polypeptide reads, in one-letter code: 3-isopropylmalate dehydrogenase (363 aa).

Position 78–91 (78–91) interacts with NAD(+); it reads GPKWEHLPPDQQPE. R99, R109, R138, and D227 together coordinate substrate. Mg(2+)-binding residues include D227, D251, and D255. 285–297 provides a ligand contact to NAD(+); that stretch reads GSAPDIAGKNIAN.

Belongs to the isocitrate and isopropylmalate dehydrogenases family. LeuB type 1 subfamily. In terms of assembly, homodimer. It depends on Mg(2+) as a cofactor. Mn(2+) is required as a cofactor.

It localises to the cytoplasm. It carries out the reaction (2R,3S)-3-isopropylmalate + NAD(+) = 4-methyl-2-oxopentanoate + CO2 + NADH. Its pathway is amino-acid biosynthesis; L-leucine biosynthesis; L-leucine from 3-methyl-2-oxobutanoate: step 3/4. Functionally, catalyzes the oxidation of 3-carboxy-2-hydroxy-4-methylpentanoate (3-isopropylmalate) to 3-carboxy-4-methyl-2-oxopentanoate. The product decarboxylates to 4-methyl-2 oxopentanoate. The sequence is that of 3-isopropylmalate dehydrogenase from Shigella sonnei (strain Ss046).